The following is a 31-amino-acid chain: Nemertide alpha-2 (31 aa).

Cystine bridges form between C2/C16, C9/C20, and C15/C26. Residues P28 and P29 each carry the 4-hydroxyproline modification.

It belongs to the nemertide family. In terms of tissue distribution, confined to the epidermis and to the mucus layer.

The protein localises to the secreted. Its function is as follows. Toxin with similar potency against both insect and mammalian sodium channels (Nav). Delays the inactivation of most Nav channels tested (B.germanica (BgNav1); EC(50)=87.2 nM, human Nav1.1/SCN1A; EC(50)=125.8 nM, rat Nav1.2/SCN2A; EC(50)=97.9 nM, rat Nav1.3/SCN3A; EC(50)=127.7 nM, rat Nav1.4/SCN4A; EC(50)=1150.3 nM, human Nav1.5/SCN5A; EC(50)=149.2 nM, mouse Nav1.6/SCN8A; EC(50)=1361.8 nM, human Nav1.9/SCN9A; EC(50)=1296.7 nM). Inactivation is completely prevented by a concentration of 1 uM, resulting in sustained, non-inactivating current. In addition, the toxin significantly enhances the recovery from inactivation, and the open state is not required for the toxin to interact with the channel. In vivo, injection into brine shrimp (Artemia salina) stops movement or causes death after 24 hours (EC(50)=2.9 uM). The polypeptide is Nemertide alpha-2 (Lineus longissimus (Bootlace worm)).